The primary structure comprises 425 residues: Putative E3 ubiquitin-protein ligase UBR7 (425 aa).

The segment at Glu-44–Asp-116 adopts a UBR-type zinc-finger fold. A PHD-type; atypical zinc finger spans residues Gly-132–Arg-188. Glycyl lysine isopeptide (Lys-Gly) (interchain with G-Cter in SUMO2) cross-links involve residues Lys-225 and Lys-252. The interval Lys-225–Asp-246 is disordered. The residue at position 264 (Ser-264) is a Phosphoserine. Lys-274 participates in a covalent cross-link: Glycyl lysine isopeptide (Lys-Gly) (interchain with G-Cter in SUMO2). Residue Ser-354 is modified to Phosphoserine. Lys-398 participates in a covalent cross-link: Glycyl lysine isopeptide (Lys-Gly) (interchain with G-Cter in SUMO2).

In terms of tissue distribution, expressed in sperm (at protein level).

The enzyme catalyses S-ubiquitinyl-[E2 ubiquitin-conjugating enzyme]-L-cysteine + [acceptor protein]-L-lysine = [E2 ubiquitin-conjugating enzyme]-L-cysteine + N(6)-ubiquitinyl-[acceptor protein]-L-lysine.. Its pathway is protein modification; protein ubiquitination. Its function is as follows. E3 ubiquitin-protein ligase which is a component of the N-end rule pathway. Recognizes and binds to proteins bearing specific N-terminal residues that are destabilizing according to the N-end rule, leading to their ubiquitination and subsequent degradation. In Homo sapiens (Human), this protein is Putative E3 ubiquitin-protein ligase UBR7 (UBR7).